Consider the following 711-residue polypeptide: Retrovirus-related Pol polyprotein from type-1 retrotransposable element R2 (711 aa).

The Reverse transcriptase domain maps to Leu45–Phe323. The segment at Leu444–Ala711 is nucleic acid-binding endonuclease.

It carries out the reaction DNA(n) + a 2'-deoxyribonucleoside 5'-triphosphate = DNA(n+1) + diphosphate. The protein is Retrovirus-related Pol polyprotein from type-1 retrotransposable element R2 of Popillia japonica (Japanese beetle).